A 492-amino-acid chain; its full sequence is Putative protein disulfide-isomerase C1F5.02 (492 aa).

An N-terminal signal peptide occupies residues 1-22 (MKISNLLAAFLAFSGGFFCASA). One can recognise a Thioredoxin 1 domain in the interval 23-128 (EVPKVNKEGL…LVKYMRKQLL (106 aa)). Active-site nucleophile residues include Cys-51 and Cys-54. Cys-51 and Cys-54 are disulfide-bonded. Residues Asn-161 and Asn-257 are each glycosylated (N-linked (GlcNAc...) asparagine). In terms of domain architecture, Thioredoxin 2 spans 323–462 (ELTAKAMTKF…LSAFIDKHAS (140 aa)). Active-site nucleophile residues include Cys-385 and Cys-388. Cysteines 385 and 388 form a disulfide. The disordered stretch occupies residues 468–492 (KEKESVPAPDLEDQVAVEDEMADEL). A compositionally biased stretch (acidic residues) spans 477-492 (DLEDQVAVEDEMADEL). A Prevents secretion from ER motif is present at residues 489 to 492 (ADEL).

The protein belongs to the protein disulfide isomerase family.

It localises to the endoplasmic reticulum lumen. It carries out the reaction Catalyzes the rearrangement of -S-S- bonds in proteins.. Its function is as follows. Participates in the folding of proteins containing disulfide bonds, may be involved in glycosylation, prolyl hydroxylation and triglyceride transfer. This is Putative protein disulfide-isomerase C1F5.02 from Schizosaccharomyces pombe (strain 972 / ATCC 24843) (Fission yeast).